Consider the following 339-residue polypeptide: MNGLEAALPSLTDNSSLAYSEQCGQETPLENMLFACFYLLDFILAFVGNALALWLFIWDHKSGTPANVFLMHLAVADLSCVLVLPTRLVYHFSGNHWPFGEIPCRLTGFLFYLNMYASIYFLTCISADRFLAIVHPVKSLKLRRPLYAHLACAFLWIVVAVAMAPLLVSPQTVQTNHTVVCLQLYREKASHHALASLAVAFTFPFITTVTCYLLIIRSLRQGPRIEKHLKNKAVRMIAMVLAIFLICFVPYHIHRSVYVLHYRGGGTSCAAQRALALGNRITSCLTSLNGALDPVMYFFVAEKFRHALCNLLCSKRLTGPPPSFEGKTNESSLSARSEL.

Residues 1–36 are Extracellular-facing; it reads MNGLEAALPSLTDNSSLAYSEQCGQETPLENMLFAC. Asn-14 carries an N-linked (GlcNAc...) asparagine glycan. A helical transmembrane segment spans residues 37–57; that stretch reads FYLLDFILAFVGNALALWLFI. At 58-64 the chain is on the cytoplasmic side; the sequence is WDHKSGT. Residues 65–85 traverse the membrane as a helical segment; it reads PANVFLMHLAVADLSCVLVLP. At 86-105 the chain is on the extracellular side; the sequence is TRLVYHFSGNHWPFGEIPCR. Residues Cys-104 and Cys-181 are joined by a disulfide bond. The helical transmembrane segment at 106–126 threads the bilayer; it reads LTGFLFYLNMYASIYFLTCIS. Residues 127–147 are Cytoplasmic-facing; it reads ADRFLAIVHPVKSLKLRRPLY. Residues 148-168 form a helical membrane-spanning segment; that stretch reads AHLACAFLWIVVAVAMAPLLV. The Extracellular segment spans residues 169 to 195; sequence SPQTVQTNHTVVCLQLYREKASHHALA. Asn-176 carries an N-linked (GlcNAc...) asparagine glycan. Residues 196 to 216 form a helical membrane-spanning segment; it reads SLAVAFTFPFITTVTCYLLII. The Cytoplasmic portion of the chain corresponds to 217-232; the sequence is RSLRQGPRIEKHLKNK. A helical membrane pass occupies residues 233–253; the sequence is AVRMIAMVLAIFLICFVPYHI. The Extracellular portion of the chain corresponds to 254-280; that stretch reads HRSVYVLHYRGGGTSCAAQRALALGNR. A helical membrane pass occupies residues 281 to 301; it reads ITSCLTSLNGALDPVMYFFVA. Residues 302 to 339 lie on the Cytoplasmic side of the membrane; the sequence is EKFRHALCNLLCSKRLTGPPPSFEGKTNESSLSARSEL.

The protein belongs to the G-protein coupled receptor 1 family.

Its subcellular location is the cell membrane. In terms of biological role, dual specificity receptor for uracil nucleotides and cysteinyl leukotrienes (CysLTs). Signals through G(i) and inhibition of adenylyl cyclase. May mediate brain damage by nucleotides and CysLTs following ischemia. This chain is Uracil nucleotide/cysteinyl leukotriene receptor, found in Mus musculus (Mouse).